A 212-amino-acid chain; its full sequence is tRNA (guanine-N(7)-)-methyltransferase (212 aa).

S-adenosyl-L-methionine contacts are provided by E44, D69, D96, and D118. D118 is a catalytic residue. Substrate is bound at residue K122. The interaction with RNA stretch occupies residues 124-129 (RHEKRR). Substrate contacts are provided by residues D154 and 191–194 (TEYE).

It belongs to the class I-like SAM-binding methyltransferase superfamily. TrmB family.

It carries out the reaction guanosine(46) in tRNA + S-adenosyl-L-methionine = N(7)-methylguanosine(46) in tRNA + S-adenosyl-L-homocysteine. The protein operates within tRNA modification; N(7)-methylguanine-tRNA biosynthesis. Functionally, catalyzes the formation of N(7)-methylguanine at position 46 (m7G46) in tRNA. The protein is tRNA (guanine-N(7)-)-methyltransferase of Streptococcus sanguinis (strain SK36).